A 436-amino-acid polypeptide reads, in one-letter code: Citrate synthase (436 aa).

Active-site residues include histidine 311 and aspartate 370.

The protein belongs to the citrate synthase family.

It carries out the reaction oxaloacetate + acetyl-CoA + H2O = citrate + CoA + H(+). It participates in carbohydrate metabolism; tricarboxylic acid cycle; isocitrate from oxaloacetate: step 1/2. The chain is Citrate synthase (gltA) from Rickettsia typhi (strain ATCC VR-144 / Wilmington).